The following is a 301-amino-acid chain: Epimerase family protein Mb2239 (301 aa).

This sequence belongs to the NAD(P)-dependent epimerase/dehydratase family. SDR39U1 subfamily.

This is Epimerase family protein Mb2239 from Mycobacterium bovis (strain ATCC BAA-935 / AF2122/97).